The following is a 304-amino-acid chain: Porphobilinogen deaminase (304 aa).

An S-(dipyrrolylmethanemethyl)cysteine modification is found at Cys239.

Belongs to the HMBS family. As to quaternary structure, monomer. Requires dipyrromethane as cofactor.

It carries out the reaction 4 porphobilinogen + H2O = hydroxymethylbilane + 4 NH4(+). It functions in the pathway porphyrin-containing compound metabolism; protoporphyrin-IX biosynthesis; coproporphyrinogen-III from 5-aminolevulinate: step 2/4. Tetrapolymerization of the monopyrrole PBG into the hydroxymethylbilane pre-uroporphyrinogen in several discrete steps. The chain is Porphobilinogen deaminase from Brucella ovis (strain ATCC 25840 / 63/290 / NCTC 10512).